Reading from the N-terminus, the 152-residue chain is D-aminoacyl-tRNA deacylase (152 aa).

Residues 142–143 (GP) carry the Gly-cisPro motif, important for rejection of L-amino acids motif.

The protein belongs to the DTD family. As to quaternary structure, homodimer.

It is found in the cytoplasm. It catalyses the reaction glycyl-tRNA(Ala) + H2O = tRNA(Ala) + glycine + H(+). It carries out the reaction a D-aminoacyl-tRNA + H2O = a tRNA + a D-alpha-amino acid + H(+). An aminoacyl-tRNA editing enzyme that deacylates mischarged D-aminoacyl-tRNAs. Also deacylates mischarged glycyl-tRNA(Ala), protecting cells against glycine mischarging by AlaRS. Acts via tRNA-based rather than protein-based catalysis; rejects L-amino acids rather than detecting D-amino acids in the active site. By recycling D-aminoacyl-tRNA to D-amino acids and free tRNA molecules, this enzyme counteracts the toxicity associated with the formation of D-aminoacyl-tRNA entities in vivo and helps enforce protein L-homochirality. This Burkholderia ambifaria (strain ATCC BAA-244 / DSM 16087 / CCUG 44356 / LMG 19182 / AMMD) (Burkholderia cepacia (strain AMMD)) protein is D-aminoacyl-tRNA deacylase.